A 355-amino-acid chain; its full sequence is 3-dehydroquinate synthase (355 aa).

Residues 71 to 76 (EGEASK), 105 to 109 (GVVGD), 129 to 130 (TS), K142, and K151 each bind NAD(+). Zn(2+) is bound by residues E184, H246, and H263.

The protein belongs to the sugar phosphate cyclases superfamily. Dehydroquinate synthase family. Requires Co(2+) as cofactor. Zn(2+) serves as cofactor. NAD(+) is required as a cofactor.

The protein resides in the cytoplasm. The catalysed reaction is 7-phospho-2-dehydro-3-deoxy-D-arabino-heptonate = 3-dehydroquinate + phosphate. It participates in metabolic intermediate biosynthesis; chorismate biosynthesis; chorismate from D-erythrose 4-phosphate and phosphoenolpyruvate: step 2/7. Functionally, catalyzes the conversion of 3-deoxy-D-arabino-heptulosonate 7-phosphate (DAHP) to dehydroquinate (DHQ). The protein is 3-dehydroquinate synthase of Streptococcus gordonii (strain Challis / ATCC 35105 / BCRC 15272 / CH1 / DL1 / V288).